Reading from the N-terminus, the 534-residue chain is MASLLDCGAGLASANASFSTATDLSQENGLFSSWFERCSKTQIAVTIFAVLIAYDQFMYIWRKGSIAGPAFKIPFMGPFIQALYPKFDAYLAQWASGPLSCVSVFHKFVVLASDRDIAHKVFKSPTFVKPCIVPMAETLLRPSAWVFLQGRAHTEYRRGLNGLFTNKAISTYLPAQEKVYDDYFERFVAASEANKSKPMAFMRLFREINCALSCRTFFGDYISQDAVEKIAEDFYQVTAALELVNVPLSVYIPFTKCWRGKRTADAVLAEFASCAAACKANMAAGAEPKCIVDQWVLHMMESKRYNDRIAAGETGAEKPKNLIREFTDEEIGQTMFTFLFASQDASSSATTWLFQILAQRPDVLDRLREENLSVRGGNKETPFELSMLESLPYTNAVIKELLRYRPPVIFVPYEATKKFPVTPNYTISKGSMIVPSCYPALHDPQVYPDPETFDPERWITGDAESKTKNWLVFGAGAHDCLARKYVPLTMAAMIGKASLELDWVHHATSQSEEIRVFATLFPEDECQLVFTRQG.

A helical membrane pass occupies residues 43–61 (IAVTIFAVLIAYDQFMYIW). Cys480 provides a ligand contact to heme.

Belongs to the cytochrome P450 family. Heme is required as a cofactor.

It is found in the endoplasmic reticulum membrane. The enzyme catalyses 5-dehydroepisterol + NADPH + O2 + H(+) = ergosta-5,7,22,24(28)-tetraen-3beta-ol + NADP(+) + 2 H2O. Its pathway is steroid metabolism; ergosterol biosynthesis. In terms of biological role, C-22 sterol desaturase; part of the third module of ergosterol biosynthesis pathway that includes the late steps of the pathway. ERG5A and ERG5B convert 5-dehydroepisterol into ergosta-5,7,22,24(28)-tetraen-3beta-ol by forming the C-22(23) double bond in the sterol side chain. The third module or late pathway involves the ergosterol synthesis itself through consecutive reactions that mainly occur in the endoplasmic reticulum (ER) membrane. Firstly, the squalene synthase ERG9 catalyzes the condensation of 2 farnesyl pyrophosphate moieties to form squalene, which is the precursor of all steroids. Squalene synthase is crucial for balancing the incorporation of farnesyl diphosphate (FPP) into sterol and nonsterol isoprene synthesis. Secondly, squalene is converted into lanosterol by the consecutive action of the squalene epoxidase ERG1 and the lanosterol synthase ERG7. Then, the delta(24)-sterol C-methyltransferase ERG6 methylates lanosterol at C-24 to produce eburicol. Eburicol is the substrate of the sterol 14-alpha demethylase encoded by CYP51A, CYP51B and CYP51C, to yield 4,4,24-trimethyl ergosta-8,14,24(28)-trienol. CYP51B encodes the enzyme primarily responsible for sterol 14-alpha-demethylation, and plays an essential role in ascospore formation. CYP51A encodes an additional sterol 14-alpha-demethylase, induced on ergosterol depletion and responsible for the intrinsic variation in azole sensitivity. The third CYP51 isoform, CYP51C, does not encode a sterol 14-alpha-demethylase, but is required for full virulence on host wheat ears. The C-14 reductase ERG24 then reduces the C14=C15 double bond which leads to 4,4-dimethylfecosterol. A sequence of further demethylations at C-4, involving the C-4 demethylation complex containing the C-4 methylsterol oxidases ERG25, the sterol-4-alpha-carboxylate 3-dehydrogenase ERG26 and the 3-keto-steroid reductase ERG27, leads to the production of fecosterol via 4-methylfecosterol. ERG28 has a role as a scaffold to help anchor ERG25, ERG26 and ERG27 to the endoplasmic reticulum. The C-8 sterol isomerase ERG2 then catalyzes the reaction which results in unsaturation at C-7 in the B ring of sterols and thus converts fecosterol to episterol. The sterol-C5-desaturases ERG3A and ERG3BB then catalyze the introduction of a C-5 double bond in the B ring to produce 5-dehydroepisterol. The C-22 sterol desaturases ERG5A and ERG5B further convert 5-dehydroepisterol into ergosta-5,7,22,24(28)-tetraen-3beta-ol by forming the C-22(23) double bond in the sterol side chain. Finally, ergosta-5,7,22,24(28)-tetraen-3beta-ol is substrate of the C-24(28) sterol reductase ERG4 to produce ergosterol. In Gibberella zeae (strain ATCC MYA-4620 / CBS 123657 / FGSC 9075 / NRRL 31084 / PH-1) (Wheat head blight fungus), this protein is C-22 sterol desaturase ERG5B.